The sequence spans 293 residues: Ribosomal protein L11 methyltransferase (293 aa).

4 residues coordinate S-adenosyl-L-methionine: threonine 145, glycine 166, aspartate 188, and asparagine 230.

The protein belongs to the methyltransferase superfamily. PrmA family.

It is found in the cytoplasm. The catalysed reaction is L-lysyl-[protein] + 3 S-adenosyl-L-methionine = N(6),N(6),N(6)-trimethyl-L-lysyl-[protein] + 3 S-adenosyl-L-homocysteine + 3 H(+). Functionally, methylates ribosomal protein L11. The polypeptide is Ribosomal protein L11 methyltransferase (Shewanella putrefaciens (strain CN-32 / ATCC BAA-453)).